The sequence spans 66 residues: Conotoxin Lt5.6 (66 aa).

The first 19 residues, 1–19, serve as a signal peptide directing secretion; that stretch reads MLCLPVFIILLLLASPAAP. Positions 20–54 are excised as a propeptide; sequence KSLETRIQNDLIRAGLTDADLKTEKGFLSGLLNVA.

The protein belongs to the conotoxin T superfamily. In terms of processing, contains 2 disulfide bonds that can be either 'C1-C3, C2-C4' or 'C1-C4, C2-C3', since these disulfide connectivities have been observed for conotoxins with cysteine framework V (for examples, see AC P0DQQ7 and AC P81755). In terms of tissue distribution, expressed by the venom duct.

Its subcellular location is the secreted. The polypeptide is Conotoxin Lt5.6 (Conus litteratus (Lettered cone)).